The following is a 374-amino-acid chain: 1,3,6,8-tetrahydroxynaphthalene synthase (374 aa).

Cys138 is a catalytic residue.

This sequence belongs to the thiolase-like superfamily. Chalcone/stilbene synthases family. In terms of assembly, homodimer.

The catalysed reaction is 5 malonyl-CoA + 5 H(+) = naphthalene-1,3,6,8-tetrol + 5 CO2 + 5 CoA + H2O. It participates in pigment biosynthesis; melanin biosynthesis. Its function is as follows. Involved in the biosynthesis of melanin but also various secondary metabolites containing a naphthoquinone ring. Catalyzes the iterative condensation of five CoA-linked malonyl units to form a pentaketide intermediate. THNS subsequently catalyzes the dual intramolecular Claisen and aldol condensations of this linear intermediate to produce the fused ring of 1,3,6,8-tetrahydroxynaphthalene (THN). This is 1,3,6,8-tetrahydroxynaphthalene synthase from Streptomyces coelicolor (strain ATCC BAA-471 / A3(2) / M145).